The sequence spans 429 residues: Stromal membrane-associated protein 2 (429 aa).

In terms of domain architecture, Arf-GAP spans Gln-13–Lys-137. The C4-type zinc-finger motif lies at Cys-28–Cys-51. A Phosphoserine modification is found at Ser-127. Positions Asp-138–Leu-172 are enriched in basic and acidic residues. Disordered regions lie at residues Asp-138–Lys-181 and Val-217–Leu-263. An interaction with clathrin heavy chains region spans residues Met-163–Met-232. Over residues Val-217–Ser-231 the composition is skewed to low complexity. 5 positions are modified to phosphoserine: Ser-219, Ser-223, Ser-225, Ser-231, and Ser-240. Positions Ser-253–Leu-263 are enriched in basic and acidic residues. The segment at Met-340–Lys-429 is interaction with PICALM.

As to quaternary structure, interacts with ARF1. Interacts with PICALM and clathrin heavy chains.

Its subcellular location is the cytoplasm. Functionally, GTPase activating protein that acts on ARF1. Can also activate ARF6 (in vitro). May play a role in clathrin-dependent retrograde transport from early endosomes to the trans-Golgi network. This Bos taurus (Bovine) protein is Stromal membrane-associated protein 2 (SMAP2).